The sequence spans 350 residues: Putative ATP-binding protein BruAb2_0487 (350 aa).

Positions Val4–Ile234 constitute an ABC transporter domain. Position 36-43 (Gly36–Ser43) interacts with ATP.

This sequence belongs to the ABC transporter superfamily. The complex is composed of two ATP-binding proteins (BruAb2_0487), two transmembrane proteins (BruAb2_0483) and a solute-binding protein (BruAb2_0484).

It is found in the cell inner membrane. In terms of biological role, probably part of an ABC transporter complex. Probably responsible for energy coupling to the transport system. This Brucella abortus biovar 1 (strain 9-941) protein is Putative ATP-binding protein BruAb2_0487.